Here is a 131-residue protein sequence, read N- to C-terminus: Keratin, high-sulfur matrix protein, IIIA3 (131 aa).

As to expression, wool.

Its function is as follows. The keratin products of mammalian epidermal derivatives such as wool and hair consist of microfibrils embedded in a rigid matrix of other proteins. The matrix proteins include the high-sulfur and high-tyrosine keratins, having molecular weights of 6-20 kDa, whereas the microfibrils contain the larger, low-sulfur keratins (40-56 kDa). This chain is Keratin, high-sulfur matrix protein, IIIA3, found in Ovis aries (Sheep).